We begin with the raw amino-acid sequence, 298 residues long: Cyclin-dependent kinase 2 (298 aa).

An N-acetylmethionine modification is found at methionine 1. The Protein kinase domain occupies 4 to 286 (FQKVEKIGEG…AKAALAHPFF (283 aa)). Lysine 6 is subject to N6-acetyllysine. 10 to 18 (IGEGTYGVV) is a binding site for ATP. Phosphothreonine is present on threonine 14. Tyrosine 15 is subject to Phosphotyrosine; by WEE1. Position 19 is a phosphotyrosine (tyrosine 19). Residues lysine 33, 81–83 (EFL), and aspartate 86 each bind ATP. Catalysis depends on aspartate 127, which acts as the Proton acceptor. ATP is bound by residues 129-132 (KPQN) and aspartate 145. The Mg(2+) site is built by asparagine 132 and aspartate 145. Threonine 160 is subject to Phosphothreonine; by CAK and CCRK.

The protein belongs to the protein kinase superfamily. CMGC Ser/Thr protein kinase family. CDC2/CDKX subfamily. As to quaternary structure, found in a complex with CABLES1, CCNA1 and CCNE1. Interacts with CABLES1. Interacts with UHRF2. Part of a complex consisting of UHRF2, CDK2 and CCNE1. Interacts with the Speedy/Ringo proteins SPDYA and SPDYC. Interaction with SPDYA promotes kinase activation via a conformation change that alleviates obstruction of the substrate-binding cleft by the T-loop. Found in a complex with both SPDYA and CDKN1B/KIP1. Binds to RB1 and CDK7. Binding to CDKN1A (p21) leads to CDK2/cyclin E inactivation at the G1-S phase DNA damage checkpoint, thereby arresting cells at the G1-S transition during DNA repair. Associated with PTPN6 and beta-catenin/CTNNB1. Interacts with CACUL1. May interact with CEP63. Interacts with ANKRD17. Interacts with CEBPA (when phosphorylated). Forms a ternary complex with CCNA2 and CDKN1B; CDKN1B inhibits the kinase activity of CDK2 through conformational rearrangements. Interacts with cyclins A, B1, B3, D, or E. Interacts with CDK2AP2. Mg(2+) is required as a cofactor. Post-translationally, phosphorylated at Thr-160 by CDK7 in a CAK complex. Phosphorylation at Thr-160 promotes kinase activity, whereas phosphorylation at Tyr-15 by WEE1 reduces slightly kinase activity. Phosphorylated on Thr-14 and Tyr-15 during S and G2 phases before being dephosphorylated by CDC25A. In terms of processing, nitrosylated after treatment with nitric oxide (DETA-NO).

The protein resides in the cytoplasm. It is found in the cytoskeleton. It localises to the microtubule organizing center. The protein localises to the centrosome. Its subcellular location is the nucleus. The protein resides in the cajal body. It is found in the endosome. The catalysed reaction is L-seryl-[protein] + ATP = O-phospho-L-seryl-[protein] + ADP + H(+). The enzyme catalyses L-threonyl-[protein] + ATP = O-phospho-L-threonyl-[protein] + ADP + H(+). Phosphorylation at Thr-14 or Tyr-15 inactivates the enzyme, while phosphorylation at Thr-160 activates it. Stimulated by MYC. Inactivated by CDKN1A (p21). Serine/threonine-protein kinase involved in the control of the cell cycle; essential for meiosis, but dispensable for mitosis. Phosphorylates CABLES1, CTNNB1, CDK2AP2, ERCC6, NBN, USP37, p53/TP53, NPM1, CDK7, RB1, BRCA2, MYC, NPAT, EZH2. Triggers duplication of centrosomes and DNA. Acts at the G1-S transition to promote the E2F transcriptional program and the initiation of DNA synthesis, and modulates G2 progression; controls the timing of entry into mitosis/meiosis by controlling the subsequent activation of cyclin B/CDK1 by phosphorylation, and coordinates the activation of cyclin B/CDK1 at the centrosome and in the nucleus. Crucial role in orchestrating a fine balance between cellular proliferation, cell death, and DNA repair in embryonic stem cells (ESCs). Activity of CDK2 is maximal during S phase and G2; activated by interaction with cyclin E during the early stages of DNA synthesis to permit G1-S transition, and subsequently activated by cyclin A2 (cyclin A1 in germ cells) during the late stages of DNA replication to drive the transition from S phase to mitosis, the G2 phase. EZH2 phosphorylation promotes H3K27me3 maintenance and epigenetic gene silencing. Cyclin E/CDK2 prevents oxidative stress-mediated Ras-induced senescence by phosphorylating MYC. Involved in G1-S phase DNA damage checkpoint that prevents cells with damaged DNA from initiating mitosis; regulates homologous recombination-dependent repair by phosphorylating BRCA2, this phosphorylation is low in S phase when recombination is active, but increases as cells progress towards mitosis. In response to DNA damage, double-strand break repair by homologous recombination a reduction of CDK2-mediated BRCA2 phosphorylation. Involved in regulation of telomere repair by mediating phosphorylation of NBN. Phosphorylation of RB1 disturbs its interaction with E2F1. NPM1 phosphorylation by cyclin E/CDK2 promotes its dissociation from unduplicated centrosomes, thus initiating centrosome duplication. Cyclin E/CDK2-mediated phosphorylation of NPAT at G1-S transition and until prophase stimulates the NPAT-mediated activation of histone gene transcription during S phase. Required for vitamin D-mediated growth inhibition by being itself inactivated. Involved in the nitric oxide- (NO) mediated signaling in a nitrosylation/activation-dependent manner. USP37 is activated by phosphorylation and thus triggers G1-S transition. CTNNB1 phosphorylation regulates insulin internalization. Phosphorylates FOXP3 and negatively regulates its transcriptional activity and protein stability. Phosphorylates ERCC6 which is essential for its chromatin remodeling activity at DNA double-strand breaks. Acts as a regulator of the phosphatidylinositol 3-kinase/protein kinase B signal transduction by mediating phosphorylation of the C-terminus of protein kinase B (PKB/AKT1 and PKB/AKT2), promoting its activation. This chain is Cyclin-dependent kinase 2 (CDK2), found in Bos taurus (Bovine).